The chain runs to 137 residues: MILGIGTDLANIDRMEKTLARFGERFRNRVFTPLEQAKAERRADVAGTYAKRWAAKEACSKALGTGLRMGIAWKDMSVANLETGQPVMRLTGWAAERLASMTPPGHEAVVHVSLTDDHPWAQAFVVIEARPRAAPPA.

2 residues coordinate Mg(2+): Asp-8 and Glu-57.

Belongs to the P-Pant transferase superfamily. AcpS family. It depends on Mg(2+) as a cofactor.

Its subcellular location is the cytoplasm. The enzyme catalyses apo-[ACP] + CoA = holo-[ACP] + adenosine 3',5'-bisphosphate + H(+). Functionally, transfers the 4'-phosphopantetheine moiety from coenzyme A to a Ser of acyl-carrier-protein. This is Holo-[acyl-carrier-protein] synthase from Cereibacter sphaeroides (strain ATCC 17023 / DSM 158 / JCM 6121 / CCUG 31486 / LMG 2827 / NBRC 12203 / NCIMB 8253 / ATH 2.4.1.) (Rhodobacter sphaeroides).